A 235-amino-acid chain; its full sequence is Thiamine import ATP-binding protein ThiQ (235 aa).

One can recognise an ABC transporter domain in the interval 2-230 (LKLENLTYRY…TVPEAAILGM (229 aa)). 32-39 (GPSGAGKS) contributes to the ATP binding site.

It belongs to the ABC transporter superfamily. Thiamine importer (TC 3.A.1.19.1) family. The complex is composed of two ATP-binding proteins (ThiQ), two transmembrane proteins (ThiP) and a solute-binding protein (ThiB).

The protein resides in the cell inner membrane. It catalyses the reaction thiamine(out) + ATP + H2O = thiamine(in) + ADP + phosphate + H(+). Part of the ABC transporter complex ThiBPQ involved in thiamine import. Responsible for energy coupling to the transport system. The protein is Thiamine import ATP-binding protein ThiQ of Photorhabdus laumondii subsp. laumondii (strain DSM 15139 / CIP 105565 / TT01) (Photorhabdus luminescens subsp. laumondii).